A 370-amino-acid polypeptide reads, in one-letter code: Flagellar P-ring protein 1 (370 aa).

A signal peptide spans methionine 1–alanine 25.

This sequence belongs to the FlgI family. In terms of assembly, the basal body constitutes a major portion of the flagellar organelle and consists of four rings (L,P,S, and M) mounted on a central rod.

It is found in the periplasm. Its subcellular location is the bacterial flagellum basal body. Assembles around the rod to form the L-ring and probably protects the motor/basal body from shearing forces during rotation. In Yersinia pestis, this protein is Flagellar P-ring protein 1.